The chain runs to 394 residues: Sorting nexin-3 (394 aa).

Disordered stretches follow at residues 1–82 (MAFY…FGGA) and 116–226 (LGGA…SATA). Composition is skewed to low complexity over residues 31–82 (AAPG…FGGA) and 131–178 (AHSS…AFPS). Positions 179–207 (GVSTSQYQPTSQGAQGASRFQSHTPSTLL) are enriched in polar residues. The PX domain occupies 272 to 389 (NFLEVEVRSP…AAFLQDSGWS (118 aa)). A 1,2-diacyl-sn-glycero-3-phospho-(1D-myo-inositol-3-phosphate) contacts are provided by Arg-315, Ser-317, Lys-341, Arg-346, and Arg-355.

This sequence belongs to the sorting nexin family.

Its subcellular location is the cytoplasm. The protein resides in the golgi apparatus membrane. The protein localises to the prevacuolar compartment membrane. Its function is as follows. Required for retention of late Golgi membrane proteins. Component of the retrieval machinery that functions by direct interaction with the cytosolic tails of certain TGN membrane proteins during the sorting/budding process at the prevacuolar compartment. Binds phosphatidylinositol 3-phosphate (PtdIns(P3)). The protein is Sorting nexin-3 (SNX3) of Mycosarcoma maydis (Corn smut fungus).